The chain runs to 167 residues: Photosystem I assembly protein Ycf3 (167 aa).

3 TPR repeats span residues 35 to 68 (AFSY…EEDP), 72 to 105 (SFIL…NNKL), and 120 to 153 (AVKA…APSN).

It belongs to the Ycf3 family.

The protein localises to the plastid. Its subcellular location is the chloroplast thylakoid membrane. Functionally, essential for the assembly of the photosystem I (PSI) complex. May act as a chaperone-like factor to guide the assembly of the PSI subunits. In Galdieria sulphuraria (Red alga), this protein is Photosystem I assembly protein Ycf3.